The sequence spans 376 residues: UDP-N-acetylglucosamine--N-acetylmuramyl-(pentapeptide) pyrophosphoryl-undecaprenol N-acetylglucosamine transferase (376 aa).

Residues 11–13 (TGG), Asn-117, Arg-160, Ser-208, and Gln-310 contribute to the UDP-N-acetyl-alpha-D-glucosamine site.

The protein belongs to the glycosyltransferase 28 family. MurG subfamily.

Its subcellular location is the cell inner membrane. The enzyme catalyses di-trans,octa-cis-undecaprenyl diphospho-N-acetyl-alpha-D-muramoyl-L-alanyl-D-glutamyl-meso-2,6-diaminopimeloyl-D-alanyl-D-alanine + UDP-N-acetyl-alpha-D-glucosamine = di-trans,octa-cis-undecaprenyl diphospho-[N-acetyl-alpha-D-glucosaminyl-(1-&gt;4)]-N-acetyl-alpha-D-muramoyl-L-alanyl-D-glutamyl-meso-2,6-diaminopimeloyl-D-alanyl-D-alanine + UDP + H(+). It functions in the pathway cell wall biogenesis; peptidoglycan biosynthesis. Cell wall formation. Catalyzes the transfer of a GlcNAc subunit on undecaprenyl-pyrophosphoryl-MurNAc-pentapeptide (lipid intermediate I) to form undecaprenyl-pyrophosphoryl-MurNAc-(pentapeptide)GlcNAc (lipid intermediate II). The polypeptide is UDP-N-acetylglucosamine--N-acetylmuramyl-(pentapeptide) pyrophosphoryl-undecaprenol N-acetylglucosamine transferase (Rickettsia africae (strain ESF-5)).